The chain runs to 160 residues: Putative UPF0479 protein YBL113W-A (160 aa).

The next 2 membrane-spanning stretches (helical) occupy residues I39–Q59 and V136–H156.

It belongs to the UPF0479 family.

The protein resides in the membrane. This chain is Putative UPF0479 protein YBL113W-A, found in Saccharomyces cerevisiae (strain ATCC 204508 / S288c) (Baker's yeast).